The sequence spans 290 residues: Shikimate dehydrogenase (NADP(+)) (290 aa).

Shikimate-binding positions include 22–24 (SLS) and Thr68. Lys72 serves as the catalytic Proton acceptor. Asp84 serves as a coordination point for NADP(+). Shikimate-binding residues include Asn93 and Asp108. NADP(+) contacts are provided by residues 133-137 (GSGGS) and Ile228. Tyr230 contributes to the shikimate binding site. Position 251 (Gly251) interacts with NADP(+).

This sequence belongs to the shikimate dehydrogenase family. Homodimer.

It carries out the reaction shikimate + NADP(+) = 3-dehydroshikimate + NADPH + H(+). It functions in the pathway metabolic intermediate biosynthesis; chorismate biosynthesis; chorismate from D-erythrose 4-phosphate and phosphoenolpyruvate: step 4/7. Its function is as follows. Involved in the biosynthesis of the chorismate, which leads to the biosynthesis of aromatic amino acids. Catalyzes the reversible NADPH linked reduction of 3-dehydroshikimate (DHSA) to yield shikimate (SA). The protein is Shikimate dehydrogenase (NADP(+)) of Leptospira interrogans serogroup Icterohaemorrhagiae serovar Lai (strain 56601).